We begin with the raw amino-acid sequence, 1042 residues long: Elongation factor 3 (1042 aa).

HEAT repeat units lie at residues 9–46 (KVLM…DPDT), 86–124 (PYLV…TMNP), 167–204 (YRLP…LISN), 206–242 (DIDK…EVHA), 243–280 (STLS…LVED), and 289–327 (PKLI…VKEG). ABC transporter domains are found at residues 425–642 (EEGE…YQDI) and 668–994 (CRMR…EQEE). Residues Asn704, Glu923, Asn926, and His952 each contribute to the ADP site. Positions 1009–1042 (KKAKKLTSSELRKKKKERMARRKKGEEVFSDEDD) are disordered. Basic residues predominate over residues 1020–1031 (RKKKKERMARRK).

This sequence belongs to the ABC transporter superfamily. ABCF family. EF3 subfamily. Monomer.

Its subcellular location is the cytoplasm. The enzyme catalyses ATP + H2O = ADP + phosphate + H(+). The protein operates within protein biosynthesis; polypeptide chain elongation. In terms of biological role, ribosome-dependent ATPase that functions in cytoplasmic translation elongation. Required for the ATP-dependent release of deacylated tRNA from the ribosomal E-site during protein biosynthesis. Stimulates the eEF1A-dependent binding of aminoacyl-tRNA to the ribosomal A-site, which has reduced affinity for tRNA as long as the E-site is occupied. Assists translation termination by stimulating the release of nascent protein from the ribosome by release factors. The polypeptide is Elongation factor 3 (TEF3) (Pneumocystis carinii).